The chain runs to 134 residues: Small ribosomal subunit protein uS11 (134 aa).

Belongs to the universal ribosomal protein uS11 family. As to quaternary structure, part of the 30S ribosomal subunit. Interacts with proteins S7 and S18. Binds to IF-3.

Its function is as follows. Located on the platform of the 30S subunit, it bridges several disparate RNA helices of the 16S rRNA. Forms part of the Shine-Dalgarno cleft in the 70S ribosome. This Leptothrix cholodnii (strain ATCC 51168 / LMG 8142 / SP-6) (Leptothrix discophora (strain SP-6)) protein is Small ribosomal subunit protein uS11.